The chain runs to 268 residues: MTLLNVSDLSHHYAHGGFSGKHQHQAVLNNVSLTLKSGETVALLGRSGCGKSTLARLLIGLESPSQGNISWRGEPLAKLNRAQRKAFRRDIQMVFQDSISAVNPRKTVREILREPMRHLLSLKKSEQLARASEMLKAVDLDDSVLDKRPPQLSGGQLQRVCLARALAVEPKLLILDEAVSNLDLVLQAGVIRLLKKLQQQFGTACLFITHDLRLVERFCQRVMVMDNGQIVETQAVGDKLTFSSDAGRVLQNAVLPAFPVRRRTSEKV.

An ABC transporter domain is found at 4–252 (LNVSDLSHHY…SSDAGRVLQN (249 aa)). An ATP-binding site is contributed by 45 to 52 (GRSGCGKS).

This sequence belongs to the ABC transporter superfamily. Nickel importer (TC 3.A.1.5.3) family. In terms of assembly, the complex is composed of two ATP-binding proteins (NikD and NikE), two transmembrane proteins (NikB and NikC) and a solute-binding protein (NikA).

The protein resides in the cell inner membrane. The catalysed reaction is Ni(2+)(out) + ATP + H2O = Ni(2+)(in) + ADP + phosphate + H(+). Part of the ABC transporter complex NikABCDE involved in nickel import. Responsible for energy coupling to the transport system. The chain is Nickel import ATP-binding protein NikE from Shigella dysenteriae serotype 1 (strain Sd197).